Here is a 160-residue protein sequence, read N- to C-terminus: Ureidoglycolate lyase (160 aa).

Belongs to the ureidoglycolate lyase family. In terms of assembly, homodimer. The cofactor is Ni(2+).

It catalyses the reaction (S)-ureidoglycolate = urea + glyoxylate. It functions in the pathway nitrogen metabolism; (S)-allantoin degradation. Functionally, catalyzes the catabolism of the allantoin degradation intermediate (S)-ureidoglycolate, generating urea and glyoxylate. Involved in the anaerobic utilization of allantoin as sole nitrogen source. Reinforces the induction of genes involved in the degradation of allantoin and glyoxylate by producing glyoxylate. The chain is Ureidoglycolate lyase from Escherichia coli O139:H28 (strain E24377A / ETEC).